A 118-amino-acid chain; its full sequence is Large ribosomal subunit protein bL20 (118 aa).

This sequence belongs to the bacterial ribosomal protein bL20 family.

Functionally, binds directly to 23S ribosomal RNA and is necessary for the in vitro assembly process of the 50S ribosomal subunit. It is not involved in the protein synthesizing functions of that subunit. In Shigella flexneri serotype 5b (strain 8401), this protein is Large ribosomal subunit protein bL20.